The sequence spans 527 residues: Homeobox protein NOBOX (527 aa).

Disordered stretches follow at residues 1 to 126 (MEPT…DLKK), 194 to 245 (VEKL…DVFP), 271 to 306 (VTPPLLSPPPIRRANLPLPLGPVQTPQVLPPMRDVP), and 488 to 527 (ETGSSLSKMSDEQTSSSLEQPALEEVRDKNKNSHAAGAKE). The segment at residues 136 to 195 (RKKTRTLYRSDQLEELERIFQEDHYPDSDKRHEISQMVGVTPQRIMVWFQNRRAKWRKVE) is a DNA-binding region (homeobox). Residues 194–203 (VEKLNEKETK) show a composition bias toward basic and acidic residues. Polar residues predominate over residues 488-506 (ETGSSLSKMSDEQTSSSLE). Over residues 511 to 527 (EEVRDKNKNSHAAGAKE) the composition is skewed to basic and acidic residues.

In terms of tissue distribution, specifically expressed in ovaries and testes. In ovaries, expressed in oocytes from primordial through antral follicles but not in granulosa cells, theca cells and corpora lutea.

It localises to the nucleus. Functionally, transcription factor which plays an essential role in postnatal follicle development. Binds preferentially to the DNA sequences 5'-TAATTG-3', 5'-TAGTTG-3' and 5'-TAATTA-3'. Directly regulates the transcription of POU5F1 and GDF9 during early folliculogenesis. In Mus musculus (Mouse), this protein is Homeobox protein NOBOX (Nobox).